The sequence spans 125 residues: Basic leucine zipper transcriptional factor ATF-like (125 aa).

A compositionally biased stretch (low complexity) spans 1-14; sequence MPHSSDSSDSSFSR. Positions 1 to 59 are disordered; that stretch reads MPHSSDSSDSSFSRSPPPGKQDSSDDVRKVQRREKNRIAAQKSRQRQTQKADTLHLESE. Residues 26-89 enclose the bZIP domain; sequence DVRKVQRREK…KYFTSVLSSH (64 aa). A basic motif region spans residues 28 to 50; sequence RKVQRREKNRIAAQKSRQRQTQK. Position 43 is a phosphoserine (S43). At T48 the chain carries Phosphothreonine. The tract at residues 54-75 is leucine-zipper; sequence LHLESEDLEKQNAALRKEIKQL.

Belongs to the bZIP family. In terms of assembly, heterodimer; mainly heterodimerizes with JUNB. The BATF-JUNB heterodimer interacts with IRF4 and IRF8. Interacts (via bZIP domain) with IRF4 and IRF8; the interaction is direct. Also forms heterodimers with JUN and JUND. Interacts with IFI35. Post-translationally, phosphorylated on serine and threonine residues and at least one tyrosine residue. Phosphorylation at Ser-43 inhibit DNA binding activity and transforms it as a negative regulator of AP-1 mediated transcription. In terms of tissue distribution, detected in postnatal and adult lymphoid tissues such as thymus, spleen and lymph nodes. In thymus most concentrated expression is found in the immediate cortical layer. Differentially expressed during T-cell development in thymus. Highly expressed in Th17, Th1 and Th2 cells and in activated B-cells.

Its subcellular location is the nucleus. The protein resides in the cytoplasm. AP-1 family transcription factor that controls the differentiation of lineage-specific cells in the immune system: specifically mediates the differentiation of T-helper 17 cells (Th17), follicular T-helper cells (TfH), CD8(+) dendritic cells and class-switch recombination (CSR) in B-cells. Acts via the formation of a heterodimer with JUNB that recognizes and binds DNA sequence 5'-TGA[CG]TCA-3'. The BATF-JUNB heterodimer also forms a complex with IRF4 (or IRF8) in immune cells, leading to recognition of AICE sequence (5'-TGAnTCA/GAAA-3'), an immune-specific regulatory element, followed by cooperative binding of BATF and IRF4 (or IRF8) and activation of genes. Controls differentiation of T-helper cells producing interleukin-17 (Th17 cells) by binding to Th17-associated gene promoters: regulates expression of the transcription factor RORC itself and RORC target genes such as IL17 (IL17A or IL17B). Also involved in differentiation of follicular T-helper cells (TfH) by directing expression of BCL6 and MAF. In B-cells, involved in class-switch recombination (CSR) by controlling the expression of both AICDA and of germline transcripts of the intervening heavy-chain region and constant heavy-chain region (I(H)-C(H)). Following infection, can participate in CD8(+) dendritic cell differentiation via interaction with IRF4 and IRF8 to mediate cooperative gene activation. Regulates effector CD8(+) T-cell differentiation by regulating expression of SIRT1. Following DNA damage, part of a differentiation checkpoint that limits self-renewal of hematopoietic stem cells (HSCs): up-regulated by STAT3, leading to differentiation of HSCs, thereby restricting self-renewal of HSCs. In Mus musculus (Mouse), this protein is Basic leucine zipper transcriptional factor ATF-like (Batf).